The primary structure comprises 209 residues: Probable GTP-binding protein EngB (209 aa).

Residues 27–201 (SGVEIAFAGR…ATKLDSWFAE (175 aa)) form the EngB-type G domain. Residues 35–42 (GRSNAGKS), 62–66 (GRTQL), 80–83 (DLPG), 147–150 (TKAD), and 180–182 (YSA) each bind GTP. Residues S42 and T64 each contribute to the Mg(2+) site.

This sequence belongs to the TRAFAC class TrmE-Era-EngA-EngB-Septin-like GTPase superfamily. EngB GTPase family. Mg(2+) serves as cofactor.

Necessary for normal cell division and for the maintenance of normal septation. The sequence is that of Probable GTP-binding protein EngB from Glaesserella parasuis serovar 5 (strain SH0165) (Haemophilus parasuis).